A 714-amino-acid chain; its full sequence is Cell wall protein IFF7 (714 aa).

Residues 1–19 (MLFTLSILSTLLFSTSISA) form the signal peptide. N200 carries N-linked (GlcNAc...) asparagine glycosylation. Over residues 320-330 (GPVPSQKSLPS) the composition is skewed to polar residues. Disordered stretches follow at residues 320-633 (GPVP…AADS) and 660-692 (PIANESSSPSSSSSSSSSSSGTPGEVIPNANGS). A compositionally biased stretch (low complexity) spans 346 to 504 (GSSSSSSVVS…SSTPLSGDSS (159 aa)). Residues N390, N394, N399, N421, and N473 are each glycosylated (N-linked (GlcNAc...) asparagine). Over residues 505–519 (QVSSLTTGTSPDTIA) the composition is skewed to polar residues. Residues 520-544 (SFQTDSTSFGFGSGSPSSGAVQSSG) are compositionally biased toward low complexity. Residues 545–558 (VTNSTPNTGDVNTQ) show a composition bias toward polar residues. 2 stretches are compositionally biased toward low complexity: residues 559–590 (SNTANIATSDNTATSTASNDTGVNTATATTTG) and 597–625 (NNNNNNNNNNNNNNNNNNNNNNNNNNTNN). N-linked (GlcNAc...) asparagine glycans are attached at residues N577, N621, N624, and N663. Positions 665-679 (SSSPSSSSSSSSSSS) are enriched in low complexity. Residue N690 is glycosylated (N-linked (GlcNAc...) asparagine). N690 carries GPI-anchor amidated asparagine lipidation. Residues 691-714 (GSSKLSIGMTFMISGFATMFALFM) constitute a propeptide, removed in mature form.

Belongs to the HYR1/IFF family. Post-translationally, the GPI-anchor is attached to the protein in the endoplasmic reticulum and serves to target the protein to the cell surface. There, the glucosamine-inositol phospholipid moiety is cleaved off and the GPI-modified mannoprotein is covalently attached via its lipidless GPI glycan remnant to the 1,6-beta-glucan of the outer cell wall layer.

Its subcellular location is the secreted. The protein localises to the cell wall. The protein resides in the membrane. GPI-anchored cell wall protein involved in cell wall organization, hyphal growth, as well as in host-fungal interaction and virulence. This Candida albicans (strain SC5314 / ATCC MYA-2876) (Yeast) protein is Cell wall protein IFF7 (IFF8).